Reading from the N-terminus, the 214-residue chain is Putative ankyrin repeat protein R844 (214 aa).

ANK repeat units follow at residues 41-70 (VEKN…QNKF), 81-110 (SLDK…NVKT), 111-140 (DNNM…DVRA), 142-170 (NDCA…DVTS), and 172-200 (NNFA…DIRA).

The sequence is that of Putative ankyrin repeat protein R844 from Acanthamoeba polyphaga mimivirus (APMV).